The sequence spans 92 residues: Anti-restriction endonuclease (92 aa).

Functionally, pays a role in the inhibition of the host restriction-modification system. Strongly inhibits the host mcrA endonuclease that cleaves 5-methyl and 5-hydroxymethylcytosines at the specific DNA sequence C(me)CGG. This chain is Anti-restriction endonuclease (arn), found in Enterobacteria phage T4 (Bacteriophage T4).